The primary structure comprises 751 residues: Fusarisetin A cluster transcription factor fsa6 (751 aa).

Residues 1–35 (MADQAQDVRPTEWGPGKTPQGRARLPSSRPREKPQ) are disordered. Positions 38–66 (CNLCRRRKLRCDRQRPCSSCAQRELGLSC) form a DNA-binding region, zn(2)-C6 fungal-type. The segment covering 107-116 (NVNAQDQVGA) has biased composition (polar residues). The tract at residues 107–153 (NVNAQDQVGATPSPRGQPRGPDYPTPAAVHAPSTNEEPVSAAVSPAD) is disordered.

Its subcellular location is the nucleus. Transcription factor that regulates the expression of the gene cluster that mediates the biosynthesis of fusarisetin A. The polypeptide is Fusarisetin A cluster transcription factor fsa6 (Fusarium sp. (strain FN080326)).